Here is a 36-residue protein sequence, read N- to C-terminus: Phosphoglycerate kinase, chloroplastic (36 aa).

Residues A22, D23, and N25 each contribute to the (2R)-3-phosphoglycerate site.

Belongs to the phosphoglycerate kinase family. As to quaternary structure, monomer. Mg(2+) is required as a cofactor.

The protein resides in the plastid. It is found in the chloroplast. It carries out the reaction (2R)-3-phosphoglycerate + ATP = (2R)-3-phospho-glyceroyl phosphate + ADP. The protein operates within carbohydrate biosynthesis; Calvin cycle. This is Phosphoglycerate kinase, chloroplastic from Scenedesmus fuscus (Green alga).